We begin with the raw amino-acid sequence, 250 residues long: Uridylate kinase (250 aa).

Residue 17–20 (KLSG) coordinates ATP. Residue glycine 59 coordinates UMP. The ATP site is built by glycine 60 and arginine 64. Residues aspartate 79 and 140 to 147 (TGNPYFTT) each bind UMP. ATP contacts are provided by threonine 167, tyrosine 173, and aspartate 176.

It belongs to the UMP kinase family. As to quaternary structure, homohexamer.

The protein resides in the cytoplasm. It carries out the reaction UMP + ATP = UDP + ADP. Its pathway is pyrimidine metabolism; CTP biosynthesis via de novo pathway; UDP from UMP (UMPK route): step 1/1. Inhibited by UTP. Catalyzes the reversible phosphorylation of UMP to UDP. The protein is Uridylate kinase of Myxococcus xanthus (strain DK1622).